The following is a 155-amino-acid chain: SsrA-binding protein (155 aa).

Belongs to the SmpB family.

The protein resides in the cytoplasm. Required for rescue of stalled ribosomes mediated by trans-translation. Binds to transfer-messenger RNA (tmRNA), required for stable association of tmRNA with ribosomes. tmRNA and SmpB together mimic tRNA shape, replacing the anticodon stem-loop with SmpB. tmRNA is encoded by the ssrA gene; the 2 termini fold to resemble tRNA(Ala) and it encodes a 'tag peptide', a short internal open reading frame. During trans-translation Ala-aminoacylated tmRNA acts like a tRNA, entering the A-site of stalled ribosomes, displacing the stalled mRNA. The ribosome then switches to translate the ORF on the tmRNA; the nascent peptide is terminated with the 'tag peptide' encoded by the tmRNA and targeted for degradation. The ribosome is freed to recommence translation, which seems to be the essential function of trans-translation. In Chelativorans sp. (strain BNC1), this protein is SsrA-binding protein.